The primary structure comprises 457 residues: G-protein coupled receptor 135 (457 aa).

Residues 1–27 (MEEQARPPSRPAASATLPGSAHPGGAA) are disordered. Residues 1-64 (MEEQARPPSR…EAAGSRGPAP (64 aa)) are Extracellular-facing. N-linked (GlcNAc...) asparagine glycosylation is present at Asn47. Residues 65–85 (LLWHGAAVAAQALVLLLIFLL) traverse the membrane as a helical segment. The Cytoplasmic portion of the chain corresponds to 86–109 (SSLGNCAVMGVIVKHRQLRTVTNA). Residues 110 to 130 (FILSLSLSDLLTALLCLPAAF) form a helical membrane-spanning segment. Topologically, residues 131-156 (LDLFAPPGDSGPWRSFCAASRFFSSC) are extracellular. Residues 157-177 (FGIVSTFSVALISLDRYCAIV) form a helical membrane-spanning segment. Residues 178–189 (RPPRDKLGRRRA) are Cytoplasmic-facing. Residues 190-210 (LQLLAGAWLAALGFSLPWELL) traverse the membrane as a helical segment. The Extracellular portion of the chain corresponds to 211 to 235 (RAPREPPTPQSFHRCLYRTSPDPAQ). The helical transmembrane segment at 236–256 (LGAAYSVGLVVACYLLPFLLM) threads the bilayer. At 257-295 (CFCRYHICKTVRLSDVRVRPMTTYARVLRFFSEVRTATT) the chain is on the cytoplasmic side. Residues 296–316 (VLIMIVFVICCWGPYCFLVLL) form a helical membrane-spanning segment. Topologically, residues 317 to 329 (AATRQGQTTQAPS) are extracellular. Residues 330-350 (LLNVAAVWLTWANGAINPVIY) traverse the membrane as a helical segment. Residues 351-457 (AIRNPNISMF…HKSETRDSSI (107 aa)) are Cytoplasmic-facing.

Belongs to the G-protein coupled receptor 1 family. Interacts with MTNR1B. Interacts with ARRB1 and ARRB2 in a spontaneous and agonist-independent manner; leading to the internalization of GPR135 in the endosomal compartment.

The protein resides in the cell membrane. It localises to the endosome membrane. Functionally, orphan receptor. Has spontaneous activity for beta-arrestin recruitment. Shows a reciprocal regulatory interaction with the melatonin receptor MTNR1B most likely through receptor heteromerization. The protein is G-protein coupled receptor 135 (Gpr135) of Rattus norvegicus (Rat).